Reading from the N-terminus, the 161-residue chain is Nucleotide-binding protein mma_0840 (161 aa).

Belongs to the YajQ family.

Functionally, nucleotide-binding protein. This chain is Nucleotide-binding protein mma_0840, found in Janthinobacterium sp. (strain Marseille) (Minibacterium massiliensis).